The primary structure comprises 80 residues: Secreted transmembrane peptide 3 (80 aa).

The signal sequence occupies residues 1–27; sequence MGLKMSSNALLLSLFLLLLCLFSEIGG. Residues 44-80 form a disordered region; sequence IATPPSLTCGGQRLGGPQPRLSPCPRPRPRPRPRTGS. Positions 62 to 80 match the SCOOP motif motif; sequence PRLSPCPRPRPRPRPRTGS. Basic residues predominate over residues 70–80; sequence PRPRPRPRTGS.

It belongs to the serine rich endogenous peptide (SCOOP) phytocytokine family. In terms of assembly, interacts with MIK2 (via extracellular leucine-rich repeat domain); this interaction triggers the formation of complex between MIK2 and the BAK1/SERK3 and SERK4 coreceptors, and subsequent BAK1 activation by phosphorylation. In terms of tissue distribution, mostly expressed in leaves, and, to a lower extent, in roots, stems, siliques, seeds and flowers.

The protein localises to the cell membrane. It localises to the secreted. It is found in the extracellular space. The protein resides in the apoplast. Its subcellular location is the endoplasmic reticulum. The protein localises to the golgi apparatus. Functionally, brassicaceae-specific phytocytokine (plant endogenous peptide released into the apoplast) perceived by MIK2 in a BAK1/SERK3 and SERK4 coreceptors-dependent manner, that modulates various physiological and antimicrobial processes including growth prevention and reactive oxygen species (ROS) response regulation. The protein is Secreted transmembrane peptide 3 of Arabidopsis thaliana (Mouse-ear cress).